Here is a 341-residue protein sequence, read N- to C-terminus: Inner membrane ABC transporter permease protein YejE (341 aa).

Over Met-1–Gly-21 the chain is Cytoplasmic. A helical transmembrane segment spans residues Tyr-22–Ala-42. Residues Asn-43–Ser-143 are Periplasmic-facing. The ABC transmembrane type-1 domain occupies Thr-140–Arg-332. A helical membrane pass occupies residues Val-144–Leu-164. At Gln-165–Arg-178 the chain is on the cytoplasmic side. A helical membrane pass occupies residues Phe-179–Val-199. The Periplasmic portion of the chain corresponds to Gln-200–Pro-201. The helical transmembrane segment at Asn-202–Val-222 threads the bilayer. The Cytoplasmic portion of the chain corresponds to Arg-223 to His-252. Residues Met-253–Ile-273 traverse the membrane as a helical segment. The Periplasmic segment spans residues Thr-274 to Pro-307. The helical transmembrane segment at Trp-308–Gly-328 threads the bilayer. Residues Glu-329 to Val-341 lie on the Cytoplasmic side of the membrane.

It belongs to the binding-protein-dependent transport system permease family. OppBC subfamily.

Its subcellular location is the cell inner membrane. Its function is as follows. Probably part of a binding-protein-dependent transport system. Probably responsible for the translocation of the substrate across the membrane. This chain is Inner membrane ABC transporter permease protein YejE (yejE), found in Escherichia coli (strain K12).